Consider the following 456-residue polypeptide: E3 ubiquitin-protein ligase RNF25 (456 aa).

Positions 18 to 127 constitute an RWD domain; that stretch reads SEVEVLESIY…EKGKEILTDN (110 aa). 8 residues coordinate Zn(2+): C134, C137, C152, H154, H157, C160, C195, and C198. An RING-type zinc finger spans residues 134–199; it reads CVICLYGFQE…AVGVQCPVCR (66 aa). The segment at 269–456 is disordered; the sequence is LEPESAVDVS…PLGLESEEGS (188 aa). Positions 288-332 are enriched in polar residues; that stretch reads SAEQSTSLADQSTLPTSLPMTTQYTYEKTSGAGPNQQRPGETQKS. 2 stretches are compositionally biased toward basic and acidic residues: residues 364-388 and 410-421; these read SEIHELPPPEKPLKETVDLKAEPRN and RTRDCARWERSK.

This sequence belongs to the RNF25 family. In terms of assembly, interacts with UBE2D2, and may also interact with UBE2E1 and UBE2E3. Interacts with RELA/p65. Post-translationally, ubiquitinated; autoubiquitinated. In terms of tissue distribution, ubiquitous.

Its subcellular location is the cytoplasm. It carries out the reaction S-ubiquitinyl-[E2 ubiquitin-conjugating enzyme]-L-cysteine + [acceptor protein]-L-lysine = [E2 ubiquitin-conjugating enzyme]-L-cysteine + N(6)-ubiquitinyl-[acceptor protein]-L-lysine.. Its pathway is protein modification; protein ubiquitination. Functionally, E3 ubiquitin-protein ligase that plays a key role in the RNF14-RNF25 translation quality control pathway, a pathway that takes place when a ribosome has stalled during translation, and which promotes ubiquitination and degradation of translation factors on stalled ribosomes. Catalyzes ubiquitination of RPS27A in response to ribosome collisions, promoting activation of RNF14. RNF25 catalyzes ubiquitination of other ribosomal proteins on stalled ribosomes, such as RPL0, RPL1, RPL12, RPS13 and RPS17. Also involved in ubiquitination and degradation of stalled ETF1/eRF1. Independently of its function in the response to stalled ribosomes, mediates ubiquitination and subsequent proteasomal degradation of NKD2. May also stimulate transcription mediated by NF-kappa-B via its interaction with RELA/p65. The sequence is that of E3 ubiquitin-protein ligase RNF25 from Mus musculus (Mouse).